The following is a 315-amino-acid chain: MEGDQETNVYTLVARKPSFDLPTACPNCLPAYIYLKLAQLPFELAFNSTFPDSDELPYFESDTYVAYNNEDGGVIEKLKKDGIVNLDSQLQSLSDYLSLKALIVSWLEEALTYEIWVGTEGISTSKIYYSDLPWVISKVLFYKQTYLAKNRLGITKENAEQREKQIYKRASEAYEALSTRLGEQKFLFEDRPSSLDAFLLSHILFIIQALPVTSVLRCKLLEHSNLVRYAEKLKSEFLEASSSSPSPPLHSFPSSFPRKSSKPKSKPKVEKTEEEKKFKKRARFFLAAQFLAVVIYVSVMGGGSSDELEYEDEDD.

The residue at position 1 (M1) is an N-acetylmethionine. Residues 157 to 181 are a coiled coil; sequence ENAEQREKQIYKRASEAYEALSTRL. A helical membrane pass occupies residues 195–215; the sequence is LDAFLLSHILFIIQALPVTSV. Residues 240 to 277 form a disordered region; sequence ASSSSPSPPLHSFPSSFPRKSSKPKSKPKVEKTEEEKK. Over residues 267-277 the composition is skewed to basic and acidic residues; sequence PKVEKTEEEKK. Residues 284–304 traverse the membrane as a helical segment; the sequence is FFLAAQFLAVVIYVSVMGGGS.

This sequence belongs to the metaxin family. Part of a high molecular weight complex that is distinct from the TOM complex. Interacts with a variety of mitochondrial precursor proteins. In terms of tissue distribution, expressed in roots, young cotyledons, flowers and leaves.

The protein resides in the mitochondrion inner membrane. The protein localises to the mitochondrion outer membrane. Involved in transport of proteins into the mitochondrion. In Arabidopsis thaliana (Mouse-ear cress), this protein is Mitochondrial outer membrane import complex protein METAXIN (MTX1).